We begin with the raw amino-acid sequence, 570 residues long: Urease subunit alpha (570 aa).

Positions 131-570 (GGVDTHIHFI…LPMAQRYFLF (440 aa)) constitute a Urease domain. Residues H136, H138, and K219 each contribute to the Ni(2+) site. Residue K219 is modified to N6-carboxylysine. Position 221 (H221) interacts with substrate. H248 and H274 together coordinate Ni(2+). H322 serves as the catalytic Proton donor. D362 contributes to the Ni(2+) binding site.

This sequence belongs to the metallo-dependent hydrolases superfamily. Urease alpha subunit family. As to quaternary structure, heterotrimer of UreA (gamma), UreB (beta) and UreC (alpha) subunits. Three heterotrimers associate to form the active enzyme. It depends on Ni cation as a cofactor. Post-translationally, carboxylation allows a single lysine to coordinate two nickel ions.

It localises to the cytoplasm. The catalysed reaction is urea + 2 H2O + H(+) = hydrogencarbonate + 2 NH4(+). It participates in nitrogen metabolism; urea degradation; CO(2) and NH(3) from urea (urease route): step 1/1. The protein is Urease subunit alpha of Methylocella silvestris (strain DSM 15510 / CIP 108128 / LMG 27833 / NCIMB 13906 / BL2).